A 456-amino-acid polypeptide reads, in one-letter code: Tyrosinase-like protein 2 (456 aa).

Positions 1 to 22 are cleaved as a signal peptide; the sequence is MNTMALFGKVILLQFLIGVGFC. The Cu cation site is built by histidine 145, histidine 154, histidine 163, histidine 295, histidine 299, and histidine 322.

The cofactor is Cu(2+). As to expression, prismatic layer of shell (at protein level).

Its subcellular location is the secreted. The polypeptide is Tyrosinase-like protein 2 (Margaritifera margaritifera (Freshwater pearl mussel)).